An 81-amino-acid chain; its full sequence is Costars family protein ABRACL (81 aa).

The protein belongs to the costars family.

This Xenopus tropicalis (Western clawed frog) protein is Costars family protein ABRACL (abracl).